Reading from the N-terminus, the 545-residue chain is Sensory neuron membrane protein 1 (545 aa).

Residues 1-10 lie on the Cytoplasmic side of the membrane; the sequence is MELKERNFKK. A helical transmembrane segment spans residues 11–31; it reads IGLICVAVLLCGMVFSYGIFP. Over 32–464 the chain is Extracellular; that stretch reads SILRFMIKQN…LFLGLKFNAT (433 aa). Residues Asn69, Asn214, and Asn227 are each glycosylated (N-linked (GlcNAc...) asparagine). Intrachain disulfides connect Cys266–Cys331, Cys295–Cys351, and Cys333–Cys340. N-linked (GlcNAc...) asparagine glycosylation is found at Asn444 and Asn462. The chain crosses the membrane as a helical span at residues 465-485; the sequence is VKWLTIIIGTVGAVGSAYMYF. The Cytoplasmic segment spans residues 486-545; it reads RKETKTTDVAPVDVSTPDTNPSSAKDGVVNVSLGRNLPPVIDGLDKPPKLRATELQQERY.

Belongs to the CD36 family. Selectively expressed in antenna.

The protein localises to the cell membrane. In terms of biological role, plays an olfactory role that is not restricted to pheromone sensitivity. This chain is Sensory neuron membrane protein 1 (snmp1), found in Anopheles gambiae (African malaria mosquito).